A 1191-amino-acid polypeptide reads, in one-letter code: Putative glycoside hydrolase 22789 (1191 aa).

The span at 173-187 (PSSSGASSVLPSPSA) shows a compositional bias: low complexity. The disordered stretch occupies residues 173-221 (PSSSGASSVLPSPSAHTPDAATDANHLPNPDPASGRQELTRAGRPARKK).

Belongs to the glycoside hydrolase-like 3 (GHL3) family.

This is Putative glycoside hydrolase 22789 from Monosiga brevicollis (Choanoflagellate).